Reading from the N-terminus, the 326-residue chain is Target of rapamycin complex subunit LST8 (326 aa).

Met1 carries the N-acetylmethionine modification. 5 WD repeats span residues 1-37 (MNTT…CTRT), 40-80 (HQDS…PIIS), 83-122 (GVSK…LQCQ), 126-165 (QVNA…NEQL), and 168-207 (EPES…GDDV). Thr51 is subject to Phosphothreonine. Lys86 is covalently cross-linked (Glycyl lysine isopeptide (Lys-Gly) (interchain with G-Cter in SUMO3)). Glycyl lysine isopeptide (Lys-Gly) (interchain with G-Cter in SUMO3) cross-links involve residues Lys215, Lys245, and Lys261. A WD 6 repeat occupies 218–257 (AHTRYALQCRFSPDSTLLATCSADQTCKIWRTSNFSLMTE). The stretch at 268–309 (SSRGWMWGCAFSGDSQYIVTASSDNLARLWCVETGEIKREYG) is one WD 7 repeat. Lys305 participates in a covalent cross-link: Glycyl lysine isopeptide (Lys-Gly) (interchain with G-Cter in SUMO3); alternate. Residues Lys305 and Lys313 each participate in a glycyl lysine isopeptide (Lys-Gly) (interchain with G-Cter in ubiquitin); alternate cross-link. Lys313 is covalently cross-linked (Glycyl lysine isopeptide (Lys-Gly) (interchain with G-Cter in SUMO1); alternate).

It belongs to the WD repeat LST8 family. As to quaternary structure, part of the mechanistic target of rapamycin complex 1 (mTORC1) which contains MTOR, MLST8 and RPTOR. mTORC1 associates with AKT1S1/PRAS40, which inhibits its activity. mTORC1 binds to and is inhibited by FKBP12-rapamycin. Within mTORC1, interacts directly with MTOR and RPTOR. Component of the mechanistic target of rapamycin complex 2 (mTORC2), consisting in two heterotretramers composed of MTOR, MLST8, RICTOR and MAPKAP1/SIN1. Contrary to mTORC1, mTORC2 does not bind to and is not sensitive to FKBP12-rapamycin. mTORC1 and mTORC2 associate with DEPTOR, which regulates their activity. Interacts with RHEB. Interacts with MEAK7. Interacts with SIK3. Interacts with SLC38A7; this interaction promotes the recruitment of mTORC1 to the lysosome and its subsequent activation. Phosphorylation at Thr-51 by CDK1 promotes ubiquitination by the SCF(FBXW7) complex, followed by degradation. In terms of processing, ubiquitination by the SCF(FBXW7) and SCF(FBXW11) complexes following phosphorylation at Thr-51 by CDK1, leads to its degradation by the proteasome. Ubiquitination at Lys-305 and Lys-313 by TRAF2 via 'Lys-63'-linked polyubiquitin chains inhibits formation of the mTORC2 complex, while promoting formation of the mTORC1 complex: ubiquitination disrupts the interaction between MLST8 and MAPKAP1/SIN1 to favor mTORC1 assembly. Deubiquitination at Lys-305 and Lys-313 by OTUD7B promotes MLST8 interaction with MAPKAP1/SIN1, facilitating mTORC2 assembly. Post-translationally, sumoylation with SUMO1, SUMO2 and SUMO3 promotes assembly of both mTORC1 and mTORC2 complexes.

It localises to the lysosome membrane. Its subcellular location is the cytoplasm. Its function is as follows. Subunit of both mTORC1 and mTORC2, which regulates cell growth and survival in response to nutrient and hormonal signals. mTORC1 is activated in response to growth factors or amino acids. In response to nutrients, mTORC1 is recruited to the lysosome membrane and promotes protein, lipid and nucleotide synthesis by phosphorylating several substrates, such as ribosomal protein S6 kinase (RPS6KB1 and RPS6KB2) and EIF4EBP1 (4E-BP1). In the same time, it inhibits catabolic pathways by phosphorylating the autophagy initiation components ULK1 and ATG13, as well as transcription factor TFEB, a master regulators of lysosomal biogenesis and autophagy. The mTORC1 complex is inhibited in response to starvation and amino acid depletion. Within mTORC1, MLST8 interacts directly with MTOR and enhances its kinase activity. In nutrient-poor conditions, stabilizes the MTOR-RPTOR interaction and favors RPTOR-mediated inhibition of MTOR activity. As part of the mTORC2 complex, transduces signals from growth factors to pathways involved in proliferation, cytoskeletal organization, lipogenesis and anabolic output. mTORC2 is also activated by growth factors, but seems to be nutrient-insensitive. In response to growth factors, mTORC2 phosphorylates and activates AGC protein kinase family members, including AKT (AKT1, AKT2 and AKT3), PKC (PRKCA, PRKCB and PRKCE) and SGK1. mTORC2 functions upstream of Rho GTPases to regulate the actin cytoskeleton, probably by activating one or more Rho-type guanine nucleotide exchange factors. mTORC2 promotes the serum-induced formation of stress-fibers or F-actin. mTORC2 plays a critical role in AKT1 activation by mediating phosphorylation of different sites depending on the context, such as 'Thr-450', 'Ser-473', 'Ser-477' or 'Thr-479', facilitating the phosphorylation of the activation loop of AKT1 on 'Thr-308' by PDPK1/PDK1 which is a prerequisite for full activation. mTORC2 regulates the phosphorylation of SGK1 at 'Ser-422'. mTORC2 also modulates the phosphorylation of PRKCA on 'Ser-657'. Within mTORC2, MLST8 acts as a bridge between MAPKAP1/SIN1 and MTOR. In Mus musculus (Mouse), this protein is Target of rapamycin complex subunit LST8.